We begin with the raw amino-acid sequence, 146 residues long: Large ribosomal subunit protein uL15 (146 aa).

The segment covering 1-13 (MKLHELKAAEGSR) has biased composition (basic and acidic residues). The disordered stretch occupies residues 1 to 56 (MKLHELKAAEGSRRVRNRVGRGAATGNGKTSGRGQKGQKARSGGKLRPGFEGGQLP). The segment covering 23 to 35 (AATGNGKTSGRGQ) has biased composition (gly residues).

Belongs to the universal ribosomal protein uL15 family. As to quaternary structure, part of the 50S ribosomal subunit.

Its function is as follows. Binds to the 23S rRNA. This is Large ribosomal subunit protein uL15 from Staphylococcus epidermidis (strain ATCC 35984 / DSM 28319 / BCRC 17069 / CCUG 31568 / BM 3577 / RP62A).